Reading from the N-terminus, the 673-residue chain is DNA ligase (673 aa).

NAD(+) is bound by residues 33-37 (DHQYD), 83-84 (SL), and Glu-117. The N6-AMP-lysine intermediate role is filled by Lys-119. NAD(+) is bound by residues Arg-140, Glu-175, Lys-282, and Lys-306. 4 residues coordinate Zn(2+): Cys-400, Cys-403, Cys-418, and Cys-424. In terms of domain architecture, BRCT spans 592-673 (RGSSAISGKT…WVKMVEDARS (82 aa)).

It belongs to the NAD-dependent DNA ligase family. LigA subfamily. Mg(2+) serves as cofactor. The cofactor is Mn(2+).

It carries out the reaction NAD(+) + (deoxyribonucleotide)n-3'-hydroxyl + 5'-phospho-(deoxyribonucleotide)m = (deoxyribonucleotide)n+m + AMP + beta-nicotinamide D-nucleotide.. DNA ligase that catalyzes the formation of phosphodiester linkages between 5'-phosphoryl and 3'-hydroxyl groups in double-stranded DNA using NAD as a coenzyme and as the energy source for the reaction. It is essential for DNA replication and repair of damaged DNA. The polypeptide is DNA ligase (Anaplasma marginale (strain Florida)).